A 106-amino-acid polypeptide reads, in one-letter code: Starvation responsive small protein A (106 aa).

The chain crosses the membrane as a helical span at residues 15–32 (ILLVNAGLISAYGVRIIF).

It localises to the cell membrane. Functionally, involved in starvation response and aggregation stage of the life cycle. May be involved in fruiting body morphogenesis and spore formation. The polypeptide is Starvation responsive small protein A (Dictyostelium discoideum (Social amoeba)).